Consider the following 183-residue polypeptide: TATA-box-binding protein (183 aa).

2 consecutive repeat copies span residues 7–83 (IENV…ARTL) and 99–177 (VQNI…RQQL).

This sequence belongs to the TBP family.

In terms of biological role, general factor that plays a role in the activation of archaeal genes transcribed by RNA polymerase. Binds specifically to the TATA box promoter element which lies close to the position of transcription initiation. This Methanothrix thermoacetophila (strain DSM 6194 / JCM 14653 / NBRC 101360 / PT) (Methanosaeta thermophila) protein is TATA-box-binding protein.